The chain runs to 250 residues: Phosphonates import ATP-binding protein PhnC (250 aa).

Residues 2–247 (IVFNNVNKVW…KLDAQAMKKI (246 aa)) enclose the ABC transporter domain. 35-42 (GLSGAGKT) is a binding site for ATP.

It belongs to the ABC transporter superfamily. Phosphonates importer (TC 3.A.1.9.1) family. The complex is composed of two ATP-binding proteins (PhnC), two transmembrane proteins (PhnE) and a solute-binding protein (PhnD).

The protein resides in the cell membrane. The enzyme catalyses phosphonate(out) + ATP + H2O = phosphonate(in) + ADP + phosphate + H(+). Its function is as follows. Part of the ABC transporter complex PhnCDE involved in phosphonates import. Responsible for energy coupling to the transport system. This is Phosphonates import ATP-binding protein PhnC from Mycoplasma mycoides subsp. mycoides SC (strain CCUG 32753 / NCTC 10114 / PG1).